Here is a 352-residue protein sequence, read N- to C-terminus: Mas-related G-protein coupled receptor member X2 (352 aa).

Topologically, residues M1–M45 are extracellular. N-linked (GlcNAc...) asparagine glycans are attached at residues N5, N16, N23, N28, and N31. The helical transmembrane segment at V46 to F66 threads the bilayer. Residues L67–A75 are Cytoplasmic-facing. Residues F76–G96 traverse the membrane as a helical segment. The Extracellular portion of the chain corresponds to Y97–S107. The chain crosses the membrane as a helical span at residues I108 to L128. Residues S129 to H155 lie on the Cytoplasmic side of the membrane. Residues T156–G176 traverse the membrane as a helical segment. At K177–D195 the chain is on the extracellular side. Residues L196–L216 traverse the membrane as a helical segment. Residues V217–T239 lie on the Cytoplasmic side of the membrane. A helical membrane pass occupies residues V240 to I260. Residues E261 to T275 lie on the Extracellular side of the membrane. A helical membrane pass occupies residues V276–I296. Residues R297–I347 lie on the Cytoplasmic side of the membrane.

Belongs to the G-protein coupled receptor 1 family. Mas subfamily.

It localises to the cell membrane. Its function is as follows. Orphan receptor. Probably involved in the function of nociceptive neurons. May regulate nociceptor function and/or development, including the sensation or modulation of pain. The sequence is that of Mas-related G-protein coupled receptor member X2 (Mrgprx2) from Mus musculus (Mouse).